We begin with the raw amino-acid sequence, 739 residues long: MQNLFLSLLAAAVTVHAYGSGGSNWDQAYSRAKDALQKLSQTEKVGLVTGVKWMGGPCVGNTYKPESIDYPSLCLQDSPLGIRFANPVTAFPAGINAGATWDTQLLYARGAAMGAEAKGLGVHVQLGPVAGPLGKNPNGGRNWEGFSVDPYLSGVAMEKTIRGMQDSGVQACAKHWLGNEQEHYRDTISSNIGDRAAHELYVWPFMDAVKADVASVMCSYNKVNGTWACESDAINNKLMKEELGFPGYIMSDWNAQHSTVNSAVSGLDMTMPGSDFSNPPGSIFWGSNLEAAVADGSVPQSRLDDMVTRILAAWYLVGQDKGYPPVAFSSWNGGKANVDVTADHGTVARAVARDSIVLLKNDQRTLPLRKPKSLAIVGLDAIVNPAGPNACSDRGCNNGTLAMGWGSGTAEFPYLVGPLDAIQKRAAADGTKIVPSTTDDPTAGASAAAAAETAIVFINSDSGEGYITVEGNLGDRNNLDPWHNGNELVKAVAAASKNVIVVVHSVGPIILETILAQPSVKAIVWAGLPGQESGNALVDVIYGDTAPSGKLPYTIAKQAADYGASWINAETDDFTEGLYIDYRHFDAKGIAPRYEFGYGLSYTTFKYSGLWVNVYTSAGAANGKVVPGGPADLFEVVGQVSVFVRNNGRVAGAEVAQLYIGLPDSAPATPPKQLRGFQKMMLQPGQMGRATFELTRRDLSYWDVQQQKWVVPSGTFKVYVGSSSRDIREEGSFRVRRGW.

The N-terminal stretch at 1–17 is a signal peptide; it reads MQNLFLSLLAAAVTVHA. N224 is a glycosylation site (N-linked (GlcNAc...) asparagine). Residue D252 is part of the active site. A glycan (N-linked (GlcNAc...) asparagine) is linked at N398.

The protein belongs to the glycosyl hydrolase 3 family.

The protein resides in the secreted. The catalysed reaction is Hydrolysis of terminal, non-reducing beta-D-glucosyl residues with release of beta-D-glucose.. It functions in the pathway glycan metabolism; cellulose degradation. Beta-glucosidases are one of a number of cellulolytic enzymes involved in the degradation of cellulosic biomass. Catalyzes the last step releasing glucose from the inhibitory cellobiose. This Neosartorya fischeri (strain ATCC 1020 / DSM 3700 / CBS 544.65 / FGSC A1164 / JCM 1740 / NRRL 181 / WB 181) (Aspergillus fischerianus) protein is Probable beta-glucosidase L (bglL).